The sequence spans 527 residues: F-box protein SKIP2 (527 aa).

The F-box domain maps to 39 to 85 (DRDFTGDLPDECLAHVFQFLGAGDRKRCSLVCKRWLLVDGQSRHRLS).

As to quaternary structure, part of a SCF (ASK-cullin-F-box) protein ligase complex. Interacts with SKP1A/ASK1, SKP1B/ASK2 and ASK11.

The protein localises to the nucleus. It participates in protein modification; protein ubiquitination. Its function is as follows. Component of SCF(ASK-cullin-F-box) E3 ubiquitin ligase complexes, which may mediate the ubiquitination and subsequent proteasomal degradation of target proteins. This Arabidopsis thaliana (Mouse-ear cress) protein is F-box protein SKIP2 (SKIP2).